The primary structure comprises 567 residues: TGF-beta receptor type-2 (567 aa).

The signal sequence occupies residues 1–22 (MGRGLLRGLWPLHIVLWTRIAS). At 23-166 (TIPPHVQKSV…NPDLLLVIFQ (144 aa)) the chain is on the extracellular side. Intrachain disulfides connect cysteine 51-cysteine 84, cysteine 54-cysteine 71, cysteine 61-cysteine 67, cysteine 77-cysteine 101, cysteine 121-cysteine 136, and cysteine 138-cysteine 143. Asparagine 70 and asparagine 94 each carry an N-linked (GlcNAc...) asparagine glycan. A glycan (N-linked (GlcNAc...) asparagine) is linked at asparagine 154. A helical membrane pass occupies residues 167-187 (VTGISLLPPLGVAISVIIIFY). Residues 188 to 567 (CYRVNRQQKL…PEDGSLNTTK (380 aa)) lie on the Cytoplasmic side of the membrane. Residues 244 to 544 (IELDTLVGKG…AERFSELEHL (301 aa)) form the Protein kinase domain. ATP-binding positions include 250–258 (VGKGRFAEV) and lysine 277. Aspartate 379 serves as the catalytic Proton acceptor. Serine 409, serine 548, and serine 553 each carry phosphoserine. A sufficient for interaction with CLU region spans residues 439–567 (VESFKQTDVY…PEDGSLNTTK (129 aa)).

Belongs to the protein kinase superfamily. TKL Ser/Thr protein kinase family. TGFB receptor subfamily. Homodimer. Heterohexamer; TGFB1, TGFB2 and TGFB3 homodimeric ligands assemble a functional receptor composed of two TGFBR1 and TGFBR2 heterodimers to form a ligand-receptor heterohexamer. The respective affinity of TGFRB1 and TGFRB2 for the ligands may modulate the kinetics of assembly of the receptor and may explain the different biological activities of TGFB1, TGFB2 and TGFB3. Component of a complex composed of TSC22D1 (via N-terminus), TGFBR1 and TGFBR2; the interaction between TSC22D1 and TGFBR1 is inhibited by SMAD7 and promoted by TGFB1. Interacts with DAXX. Interacts with DYNLT4. Interacts with ZFYVE9; ZFYVE9 recruits SMAD2 and SMAD3 to the TGF-beta receptor. Interacts with and is activated by SCUBE3; this interaction does not affect TGFB1-binding to TGFBR2. Interacts with VPS39; this interaction is independent of the receptor kinase activity and of the presence of TGF-beta. Interacts with CLU. As to quaternary structure, homodimer; disulfide-linked. Requires Mg(2+) as cofactor. Mn(2+) serves as cofactor. Post-translationally, phosphorylated on a Ser/Thr residue in the cytoplasmic domain.

Its subcellular location is the cell membrane. It localises to the membrane raft. It is found in the secreted. The catalysed reaction is L-threonyl-[receptor-protein] + ATP = O-phospho-L-threonyl-[receptor-protein] + ADP + H(+). It catalyses the reaction L-seryl-[receptor-protein] + ATP = O-phospho-L-seryl-[receptor-protein] + ADP + H(+). Functionally, transmembrane serine/threonine kinase forming with the TGF-beta type I serine/threonine kinase receptor, TGFBR1, the non-promiscuous receptor for the TGF-beta cytokines TGFB1, TGFB2 and TGFB3. Transduces the TGFB1, TGFB2 and TGFB3 signal from the cell surface to the cytoplasm and thus regulates a plethora of physiological and pathological processes including cell cycle arrest in epithelial and hematopoietic cells, control of mesenchymal cell proliferation and differentiation, wound healing, extracellular matrix production, immunosuppression and carcinogenesis. The formation of the receptor complex composed of 2 TGFBR1 and 2 TGFBR2 molecules symmetrically bound to the cytokine dimer results in the phosphorylation and activation of TGFBR1 by the constitutively active TGFBR2. Activated TGFBR1 phosphorylates SMAD2 which dissociates from the receptor and interacts with SMAD4. The SMAD2-SMAD4 complex is subsequently translocated to the nucleus where it modulates the transcription of the TGF-beta-regulated genes. This constitutes the canonical SMAD-dependent TGF-beta signaling cascade. Also involved in non-canonical, SMAD-independent TGF-beta signaling pathways. In terms of biological role, has transforming growth factor beta-activated receptor activity. Binds TGFB1, TGFB2 and TGFB3 in the picomolar affinity range without the participation of additional receptors. Blocks activation of SMAD2 and SMAD3 by TGFB1. This Homo sapiens (Human) protein is TGF-beta receptor type-2 (TGFBR2).